The chain runs to 95 residues: Integration host factor subunit beta (95 aa).

This sequence belongs to the bacterial histone-like protein family. In terms of assembly, heterodimer of an alpha and a beta chain.

This protein is one of the two subunits of integration host factor, a specific DNA-binding protein that functions in genetic recombination as well as in transcriptional and translational control. This Ruegeria sp. (strain TM1040) (Silicibacter sp.) protein is Integration host factor subunit beta.